The sequence spans 70 residues: DNA-directed RNA polymerase subunit epsilon (70 aa).

Belongs to the RNA polymerase subunit epsilon family. As to quaternary structure, RNAP is composed of a core of 2 alpha, a beta and a beta' subunit. The core is associated with a delta subunit, and at least one of epsilon or omega. When a sigma factor is associated with the core the holoenzyme is formed, which can initiate transcription.

It carries out the reaction RNA(n) + a ribonucleoside 5'-triphosphate = RNA(n+1) + diphosphate. A non-essential component of RNA polymerase (RNAP). This Limosilactobacillus reuteri (strain DSM 20016) (Lactobacillus reuteri) protein is DNA-directed RNA polymerase subunit epsilon.